The chain runs to 550 residues: Arginine--tRNA ligase (550 aa).

The 'HIGH' region signature appears at A130 to G140.

It belongs to the class-I aminoacyl-tRNA synthetase family. In terms of assembly, monomer.

Its subcellular location is the cytoplasm. It catalyses the reaction tRNA(Arg) + L-arginine + ATP = L-arginyl-tRNA(Arg) + AMP + diphosphate. This Corynebacterium efficiens (strain DSM 44549 / YS-314 / AJ 12310 / JCM 11189 / NBRC 100395) protein is Arginine--tRNA ligase.